We begin with the raw amino-acid sequence, 127 residues long: Large ribosomal subunit protein bL12 (127 aa).

Belongs to the bacterial ribosomal protein bL12 family. As to quaternary structure, homodimer. Part of the ribosomal stalk of the 50S ribosomal subunit. Forms a multimeric L10(L12)X complex, where L10 forms an elongated spine to which 2 to 4 L12 dimers bind in a sequential fashion. Binds GTP-bound translation factors.

Functionally, forms part of the ribosomal stalk which helps the ribosome interact with GTP-bound translation factors. Is thus essential for accurate translation. This is Large ribosomal subunit protein bL12 from Rhizobium etli (strain ATCC 51251 / DSM 11541 / JCM 21823 / NBRC 15573 / CFN 42).